Here is a 154-residue protein sequence, read N- to C-terminus: Ribonuclease H (154 aa).

The RNase H type-1 domain occupies 3 to 144 (ELPVVTIYTD…ADQLARDGIV (142 aa)). Residues aspartate 12, glutamate 50, aspartate 72, and aspartate 136 each coordinate Mg(2+).

Belongs to the RNase H family. As to quaternary structure, monomer. The cofactor is Mg(2+).

The protein localises to the cytoplasm. The enzyme catalyses Endonucleolytic cleavage to 5'-phosphomonoester.. Endonuclease that specifically degrades the RNA of RNA-DNA hybrids. This Bradyrhizobium diazoefficiens (strain JCM 10833 / BCRC 13528 / IAM 13628 / NBRC 14792 / USDA 110) protein is Ribonuclease H.